A 318-amino-acid polypeptide reads, in one-letter code: Retinol dehydrogenase 5 (318 aa).

The chain crosses the membrane as a helical span at residues 1-23 (MWLPLLLGALLWAVLWLLRDRQS). The Lumenal portion of the chain corresponds to 24 to 288 (LPASDAFIFI…TRYSPGWDAK (265 aa)). 32 to 56 (FITGCDSGFGRLLALQLDQKGFQVL) lines the NADP(+) pocket. Residue Ser-163 coordinates substrate. Catalysis depends on Tyr-175, which acts as the Proton acceptor. Residues 289-309 (LLWLPASYLPARVVDAVLTWI) traverse the membrane as a helical segment. Over 310–318 (LPRPAQSVS) the chain is Cytoplasmic.

This sequence belongs to the short-chain dehydrogenases/reductases (SDR) family. Homodimer. Expressed in eye, liver, kidney, brain, intestine, placenta, epididymus and submaxillary gland. In eye, strongly expressed in the retinal pigment epithelium, with lower expression levels detected in the inner segment of the photoreceptor cells and in the outer plexiform layer. In kidney, strong expression detected in the distal tubules and the transitional epithelium in the renal pelvis, with weaker expression detected in the epithelium of the outer stripe of the outer zone of the medulla. In liver, detected in hepatocytes in the centrilobular area. In lung, present in club cells in the epithelium of the bronchiole, in parenchyma and in cartilage surrounding the secondary bronchi. In skin, expressed in epidermis, hair follicles and mast cells in the dermis. Expressed in heart. Not detected in heart. Not detected in lung, spleen, skeletal muscle and testis.

The protein localises to the endoplasmic reticulum membrane. It catalyses the reaction 11-cis-retinol + NAD(+) = 11-cis-retinal + NADH + H(+). The catalysed reaction is 9-cis-retinol + NAD(+) = 9-cis-retinal + NADH + H(+). The enzyme catalyses 13-cis-retinol + NAD(+) = 13-cis-retinal + NADH + H(+). It carries out the reaction androsterone + NAD(+) = 5alpha-androstan-3,17-dione + NADH + H(+). It catalyses the reaction 5alpha-androstane-3alpha,17beta-diol + NAD(+) = 17beta-hydroxy-5alpha-androstan-3-one + NADH + H(+). The protein operates within cofactor metabolism; retinol metabolism. With respect to regulation, inhibited by 9-cis-, 13-cis- and all-trans-retinoic acids, with the most potent inhibitor being 13-cis-retinoic acid. Weakly inhibited by oleic acid. Catalyzes the oxidation of cis-isomers of retinol, including 11-cis-, 9-cis-, and 13-cis-retinol in an NAD-dependent manner. Has no activity towards all-trans retinal. Plays a significant role in 11-cis retinol oxidation in the retinal pigment epithelium cells (RPE). Also recognizes steroids (androsterone, androstanediol) as its substrates. The protein is Retinol dehydrogenase 5 of Mus musculus (Mouse).